Here is a 256-residue protein sequence, read N- to C-terminus: Ribonuclease 3 (256 aa).

In terms of domain architecture, RNase III spans 3 to 125 (LDALQQRLGY…IVGAVFLDAG (123 aa)). Glu-38 is a Mg(2+) binding site. Asp-42 is an active-site residue. Mg(2+)-binding residues include Asp-111 and Glu-114. Residue Glu-114 is part of the active site. In terms of domain architecture, DRBM spans 152-222 (DAKTLLQEYL…AKLALDEVQK (71 aa)). The interval 230 to 256 (RSRAERTGKTRKQPVPQDPQLSLRLKE) is disordered.

This sequence belongs to the ribonuclease III family. As to quaternary structure, homodimer. Mg(2+) serves as cofactor.

Its subcellular location is the cytoplasm. The catalysed reaction is Endonucleolytic cleavage to 5'-phosphomonoester.. Digests double-stranded RNA. Involved in the processing of primary rRNA transcript to yield the immediate precursors to the large and small rRNAs (23S and 16S). Processes some mRNAs, and tRNAs when they are encoded in the rRNA operon. Processes pre-crRNA and tracrRNA of type II CRISPR loci if present in the organism. The protein is Ribonuclease 3 of Cupriavidus necator (strain ATCC 17699 / DSM 428 / KCTC 22496 / NCIMB 10442 / H16 / Stanier 337) (Ralstonia eutropha).